The primary structure comprises 421 residues: WD repeat and SOCS box-containing protein 1 (421 aa).

5 WD repeats span residues 124-165, 168-208, 212-251, 254-293, and 309-346; these read SRCV…LLLN, DHIE…NMVK, AHQN…MIRK, GHHH…LLME, and ANDR…DCPV. Residues 372 to 421 form the SOCS box domain; that stretch reads DGSVYFWATPRQVPSLQHICRMSIRRVMSTQEVQKLPVPSKILAFLSYRG.

In terms of assembly, interacts with DIO2. Component of the probable ECS(WSB1) E3 ubiquitin-protein ligase complex which contains CUL5, RNF7/RBX2, Elongin BC complex and WSB1. Component of a probable ECS-like E3 ubiquitin-protein ligase complex which contains CUL5, RBX1, Elongin BC complex and WSB1. Interacts with CUL5, RNF7, ELOB and ELOC. Binds to HIPK2 through WD40 repeats.

Its pathway is protein modification; protein ubiquitination. Probable substrate-recognition component of a SCF-like ECS (Elongin-Cullin-SOCS-box protein) E3 ubiquitin ligase complex which mediates the ubiquitination and subsequent proteasomal degradation of target proteins. Recognizes type II iodothyronine deiodinase/DIO2. Confers constitutive instability to HIPK2 through proteasomal degradation. This chain is WD repeat and SOCS box-containing protein 1 (Wsb1), found in Mus musculus (Mouse).